The chain runs to 474 residues: Alanine/serine racemase (474 aa).

Pyridoxal 5'-phosphate-binding positions include 139–140 (GS) and Gln-282. N6-(pyridoxal phosphate)lysine is present on Lys-308. Residue Thr-336 participates in pyridoxal 5'-phosphate binding.

It belongs to the class-III pyridoxal-phosphate-dependent aminotransferase family. As to quaternary structure, homohexamer. The cofactor is pyridoxal 5'-phosphate.

The catalysed reaction is L-alanine = D-alanine. The enzyme catalyses L-serine = D-serine. Its activity is regulated as follows. Completely inhibited by hydroxylamine hydrochloride. In terms of biological role, catalyzes the interconversion of L-alanine and D-alanine, and L-serine and D-serine. Has weak activity with valine and threonine. In Pyrococcus horikoshii (strain ATCC 700860 / DSM 12428 / JCM 9974 / NBRC 100139 / OT-3), this protein is Alanine/serine racemase.